We begin with the raw amino-acid sequence, 201 residues long: Holliday junction branch migration complex subunit RuvA (201 aa).

The interval 1-63 is domain I; that stretch reads MIEFVRGYVD…EDTLALYGFR (63 aa). The domain II stretch occupies residues 64–142; the sequence is TREERTLFAK…AVTAKTFPDL (79 aa). The segment at 143-153 is flexible linker; that stretch reads FHLQEESARPH. Residues 153 to 201 are domain III; the sequence is HLSALEEAIEALKALGYAEREIQKVVPSLMKENLSTDQYVKRALQQLLK.

It belongs to the RuvA family. As to quaternary structure, homotetramer. Forms an RuvA(8)-RuvB(12)-Holliday junction (HJ) complex. HJ DNA is sandwiched between 2 RuvA tetramers; dsDNA enters through RuvA and exits via RuvB. An RuvB hexamer assembles on each DNA strand where it exits the tetramer. Each RuvB hexamer is contacted by two RuvA subunits (via domain III) on 2 adjacent RuvB subunits; this complex drives branch migration. In the full resolvosome a probable DNA-RuvA(4)-RuvB(12)-RuvC(2) complex forms which resolves the HJ.

It is found in the cytoplasm. Functionally, the RuvA-RuvB-RuvC complex processes Holliday junction (HJ) DNA during genetic recombination and DNA repair, while the RuvA-RuvB complex plays an important role in the rescue of blocked DNA replication forks via replication fork reversal (RFR). RuvA specifically binds to HJ cruciform DNA, conferring on it an open structure. The RuvB hexamer acts as an ATP-dependent pump, pulling dsDNA into and through the RuvAB complex. HJ branch migration allows RuvC to scan DNA until it finds its consensus sequence, where it cleaves and resolves the cruciform DNA. This chain is Holliday junction branch migration complex subunit RuvA, found in Geobacillus sp. (strain WCH70).